A 444-amino-acid polypeptide reads, in one-letter code: Nuclear distribution protein nudF (444 aa).

The 33-residue stretch at 9–41 folds into the LisH domain; it reads QAEALHKAMLAYLSVINAPQTAETLREELHFDE. Residues 60–88 adopt a coiled-coil conformation; it reads TGIARLQRRINDLEAEVRSLQAELEASPS. The disordered stretch occupies residues 83–107; the sequence is LEASPSAARAKNQDPTNWLPKPSST. 7 WD repeats span residues 112–153, 155–195, 199–239, 243–282, 285–345, 347–386, and 391–437; these read SHRD…RTLK, HIRG…ANIR, GHDH…CVKV, ATESWIRDVSPSFDGKWLVSGGRDQAITVWEVSSAEPKAA, GHEN…IKTL, GHDNWVRGLVFHPGGKYLFSVSDDKTIRCWDLSQEGRLVK, and AHEH…GCAD.

This sequence belongs to the WD repeat LIS1/nudF family. As to quaternary structure, interacts with dynein. Self-associates. Interacts with bnfA, nudC and nudE.

It localises to the cytoplasm. The protein resides in the cytoskeleton. It is found in the spindle pole. Positively regulates the activity of the minus-end directed microtubule motor protein dynein. May enhance dynein-mediated microtubule sliding by targeting dynein to the microtubule plus end. Required for nuclear migration during vegetative growth as well as development. Required for retrograde early endosome (EE) transport from the hyphal tip. Required for localization of dynein to the mitotic spindle poles. Recruits additional proteins to the dynein complex at SPBs. The polypeptide is Nuclear distribution protein nudF (Emericella nidulans (strain FGSC A4 / ATCC 38163 / CBS 112.46 / NRRL 194 / M139) (Aspergillus nidulans)).